Reading from the N-terminus, the 865-residue chain is Fanconi-associated nuclease 1 homolog (865 aa).

The segment at 35 to 62 adopts a UBZ4-type zinc-finger fold; that stretch reads GKICPLCETKFSLASYKSHMNTCNVADD. Positions 38, 41, 53, and 57 each coordinate Zn(2+). Disordered stretches follow at residues 90–140 and 162–187; these read DASF…SLDV and RRSS…PVKK. Basic and acidic residues-rich tracts occupy residues 93–112 and 174–187; these read FSDK…REVP and DQAD…PVKK. Mn(2+)-binding residues include Glu-682, Asp-810, Glu-825, and Val-826. The 114-residue stretch at 744 to 857 folds into the VRR-NUC domain; the sequence is QELIEENIRK…GIRAEVCHVA (114 aa).

The protein belongs to the FAN1 family. It depends on Mn(2+) as a cofactor. Mg(2+) is required as a cofactor.

It is found in the nucleus. It carries out the reaction Hydrolytically removes 5'-nucleotides successively from the 3'-hydroxy termini of 3'-hydroxy-terminated oligonucleotides.. Its function is as follows. Nuclease required for the repair of DNA interstrand cross-links (ICL). Acts as a 5'-3' exonuclease that anchors at a cut end of DNA and cleaves DNA successively at every third nucleotide, allowing to excise an ICL from one strand through flanking incisions. In Caenorhabditis elegans, this protein is Fanconi-associated nuclease 1 homolog (fan-1).